Consider the following 114-residue polypeptide: rRNA-processing protein cgrA (114 aa).

Residues Met1–Arg96 are disordered. Residues Ala40–Arg101 adopt a coiled-coil conformation. The segment covering Lys41 to Lys93 has biased composition (basic and acidic residues).

Belongs to the CGR1 family.

It is found in the nucleus. The protein resides in the nucleolus. Its function is as follows. Involved in nucleolar integrity and required for processing of the pre-rRNA for the 60S ribosome subunit. In Aspergillus terreus (strain NIH 2624 / FGSC A1156), this protein is rRNA-processing protein cgrA (cgrA).